A 365-amino-acid chain; its full sequence is Galactoside alpha-(1,2)-fucosyltransferase 1 (365 aa).

The Cytoplasmic segment spans residues 1-8 (MWPLSHRH). Residues 9-25 (LCLAFLLVCVLSAISFF) form a helical; Signal-anchor for type II membrane protein membrane-spanning segment. Over 26 to 365 (LHLYQDSIRH…LSPLWTLAEP (340 aa)) the chain is Lumenal. Residues Asn-65, Asn-301, and Asn-327 are each glycosylated (N-linked (GlcNAc...) asparagine).

This sequence belongs to the glycosyltransferase 11 family.

It localises to the golgi apparatus. Its subcellular location is the golgi stack membrane. The catalysed reaction is a beta-D-galactosyl-(1-&gt;4)-N-acetyl-beta-D-glucosaminyl derivative + GDP-beta-L-fucose = an alpha-L-Fuc-(1-&gt;2)-beta-D-Gal-(1-&gt;4)-beta-D-GlcNAc derivative + GDP + H(+). It catalyses the reaction a ganglioside GA1 + GDP-beta-L-fucose = a ganglioside Fuc-GA1 + GDP + H(+). It carries out the reaction a beta-D-Gal-(1-&gt;3)-beta-D-GlcNAc-(1-&gt;3)-beta-D-Gal-(1-&gt;4)-beta-D-Glc-(1&lt;-&gt;1')-Cer(d18:1(4E)) + GDP-beta-L-fucose = alpha-L-fucosyl-(1-&gt;2)- beta-D-galactosyl-(1-&gt;3)-N-acetyl-beta-D-glucosaminyl-(1-&gt;3)-beta-D-galactosyl-(1-&gt;4)-beta-D-glucosyl-(1&lt;-&gt;1')-N-acylsphing-4-enine + GDP + H(+). The enzyme catalyses a neolactoside nLc4Cer(d18:1(4E)) + GDP-beta-L-fucose = a neolactoside IV(2)-alpha-Fuc-nLc4Cer(d18:1(4E)) + GDP + H(+). The catalysed reaction is a ganglioside GM1 + GDP-beta-L-fucose = a ganglioside Fuc-GM1 + GDP + H(+). It catalyses the reaction beta-D-galactosyl-(1-&gt;3)-N-acetyl-D-galactosamine + GDP-beta-L-fucose = alpha-L-fucosyl-(1-&gt;2)-beta-D-galactosyl-(1-&gt;3)-N-acetyl-D-galactosamine + GDP + H(+). The protein operates within protein modification; protein glycosylation. Functionally, catalyzes the transfer of L-fucose, from a guanosine diphosphate-beta-L-fucose, to the terminal galactose residue of glycoconjugates through an alpha(1,2) linkage leading to H antigen synthesis that is an intermediate substrate in the synthesis of ABO blood group antigens. H antigen is essential for maturation of the glomerular layer of the main olfactory bulb, in cell migration and early cell-cell contacts during tumor associated angiogenesis. Preferentially fucosylates soluble lactose and to a lesser extent fucosylates glycolipids gangliosides GA1 and GM1a. The sequence is that of Galactoside alpha-(1,2)-fucosyltransferase 1 from Leontopithecus chrysomelas (Golden-headed lion tamarin).